The sequence spans 112 residues: Ferredoxin-2 (112 aa).

4Fe-4S ferredoxin-type domains are found at residues 2–30 and 31–60; these read TYVV…YEGE and NTLV…PDTE. [3Fe-4S] cluster is bound by residues cysteine 9 and cysteine 17. [4Fe-4S] cluster contacts are provided by cysteine 21, cysteine 40, cysteine 43, and cysteine 46. Residue cysteine 50 participates in [3Fe-4S] cluster binding. Positions 85–103 are enriched in basic and acidic residues; it reads DPMPDHKKYDGETGKREKY. Positions 85–112 are disordered; the sequence is DPMPDHKKYDGETGKREKYFSPNPGTGD.

[4Fe-4S] cluster is required as a cofactor. [3Fe-4S] cluster serves as cofactor.

In terms of biological role, ferredoxins are iron-sulfur proteins that transfer electrons in a wide variety of metabolic reactions. The polypeptide is Ferredoxin-2 (fdxA) (Rhodobacter capsulatus (strain ATCC BAA-309 / NBRC 16581 / SB1003)).